Reading from the N-terminus, the 491-residue chain is Endoglucanase 14 (491 aa).

The first 31 residues, 1-31 (MSQLKIGSSQCLWTSICIVLFVLSMARGAVS), serve as a signal peptide directing secretion. D86 functions as the Nucleophile in the catalytic mechanism. Residue N397 is glycosylated (N-linked (GlcNAc...) asparagine). Active-site residues include H413, D465, and E474.

It belongs to the glycosyl hydrolase 9 (cellulase E) family.

It is found in the secreted. It catalyses the reaction Endohydrolysis of (1-&gt;4)-beta-D-glucosidic linkages in cellulose, lichenin and cereal beta-D-glucans.. The protein is Endoglucanase 14 of Arabidopsis thaliana (Mouse-ear cress).